The sequence spans 500 residues: Coiled-coil domain-containing protein 85A (500 aa).

The span at 1–23 (MSKAAGGSAPAAESCPSAPAGAS) shows a compositional bias: low complexity. The interval 1–30 (MSKAAGGSAPAAESCPSAPAGASTPTGVDD) is disordered. 2 coiled-coil regions span residues 38–104 (ELLQ…RDLC) and 132–171 (MHKE…DEEK). Disordered regions lie at residues 200–405 (RDVG…SGMN) and 426–465 (NRML…QPEP). Low complexity predominate over residues 204 to 215 (DGSSTSSTGSTD). The segment covering 231-254 (HLQKPRSEGSPEHTKHRSTSPEHL) has biased composition (basic and acidic residues). Residues 372 to 381 (GSGGSGGGSR) show a composition bias toward gly residues. The span at 383–395 (GTLRRPAQEDSSS) shows a compositional bias: basic and acidic residues. Residues 404–429 (MNESTLSYVRQLEARVRQLEEENRML) are a coiled coil. Positions 434-463 (FRLSSGADGNNSSLNSPASFSGHTTPSQQP) are enriched in polar residues. Arginine 488 is subject to Asymmetric dimethylarginine.

This sequence belongs to the CCDC85 family. As to quaternary structure, may interact with ARVCF; CTNND1; CTNND2 and PKP4.

Its subcellular location is the cell junction. The protein resides in the adherens junction. In terms of biological role, may play a role in cell-cell adhesion and epithelium development through its interaction with proteins of the beta-catenin family. The sequence is that of Coiled-coil domain-containing protein 85A (Ccdc85a) from Mus musculus (Mouse).